A 41-amino-acid chain; its full sequence is Trypsin inhibitor (41 aa).

3 disulfides stabilise this stretch: Cys-15–Cys-26, Cys-17–Cys-24, and Cys-29–Cys-37.

In terms of biological role, has two active sites that simultaneously bind and inhibit trypsin. This Trichosanthes kirilowii (Chinese snake gourd) protein is Trypsin inhibitor.